Here is a 521-residue protein sequence, read N- to C-terminus: 3,4-dihydroxyphenylacetaldehyde synthase (521 aa).

Lysine 306 is modified (N6-(pyridoxal phosphate)lysine).

The protein belongs to the group II decarboxylase family. It depends on pyridoxal 5'-phosphate as a cofactor. As to expression, highly expressed in the cuticle and midgut. Low expression in the head and thorax.

It catalyses the reaction L-dopa + O2 + H2O + H(+) = 3,4-dihydroxyphenylacetaldehyde + H2O2 + NH4(+) + CO2. Catalyzes the decarboxylation-oxidative deamination of L-3,4-dihydroxyphenylalanine (L-DOPA) to 3,4-dihydroxylphenylacetaldehyde (DHPAA). Involved in cuticle development. Probably responsible for the protein cross-linking during the development of flexible cuticles. This is 3,4-dihydroxyphenylacetaldehyde synthase from Aedes aegypti (Yellowfever mosquito).